Reading from the N-terminus, the 1877-residue chain is Neuron navigator 1 (1877 aa).

Met1 is modified (N-acetylmethionine). Residues 1–59 (MLGSSVKSVQPEVELSSGGGDEGADEPRGAGRKAAAADGRGMLPKRAKAPGGGGGMAKA) form a disordered region. Residues 32–41 (RKAAAADGRG) show a composition bias toward low complexity. Ser90, Ser142, and Ser152 each carry phosphoserine. The interval 114–225 (DMAKAPKGLG…PVPSAKGQEE (112 aa)) is disordered. A Phosphothreonine modification is found at Thr159. Phosphoserine is present on residues Ser194 and Ser199. The span at 205–214 (SSKAKAQKSS) shows a compositional bias: low complexity. Residues 255–280 (ESQRKRTVQNVLDLRQNLEETMSSLR) adopt a coiled-coil conformation. The segment at 294-336 (YDSDDANPRSVSSLSNRSSPLSWRYGQSSPRLQAGDAPSVGGS) is disordered. Ser296, Ser308, Ser312, Ser362, and Ser391 each carry phosphoserine. The segment covering 301–315 (PRSVSSLSNRSSPLS) has biased composition (low complexity). Disordered stretches follow at residues 386 to 839 (KSGY…PLPS) and 892 to 989 (MSLP…PMSL). Low complexity-rich tracts occupy residues 411-425 (DESS…DASD) and 433-448 (NASS…PTAS). 4 positions are modified to phosphoserine: Ser452, Ser474, Ser476, and Ser490. Over residues 476-486 (SEEKAPKKLEY) the composition is skewed to basic and acidic residues. The segment covering 503–519 (ERPESCDDSSKGGELKK) has biased composition (basic and acidic residues). Ser528 is subject to Phosphoserine. At Thr534 the chain carries Phosphothreonine. Residue Ser541 is modified to Phosphoserine. Thr544 is subject to Phosphothreonine. Basic and acidic residues predominate over residues 555–566 (GKPEGKATDKGK). The residue at position 572 (Thr572) is a Phosphothreonine. Basic and acidic residues predominate over residues 581–591 (AGRDRLSDAKK). Composition is skewed to polar residues over residues 615–635 (GTAT…QKSS) and 645–655 (RKTSLDVSNSA). A Phosphoserine modification is found at Ser648. Arg688 is subject to Omega-N-methylarginine. 2 stretches are compositionally biased toward polar residues: residues 698–710 (IDPS…QGGL) and 724–733 (GRTTPAPVNQ). Residues 731–756 (VNQTDREKEKAKAKAVALDSDNISLK) adopt a coiled-coil conformation. Residues Ser750, Ser754, Ser760, Ser797, and Ser808 each carry the phosphoserine modification. The segment covering 751–773 (DNISLKSIGSPESTPKNQASHPT) has biased composition (polar residues). Residues 805–818 (NSNSLDLPSSSDTT) are compositionally biased toward low complexity. The segment covering 902–913 (TPVPTPPAPPAA) has biased composition (pro residues). Ser1000 carries the phosphoserine modification. A Phosphothreonine modification is found at Thr1006. A coiled-coil region spans residues 1072–1163 (SSAEERMQSE…SEAQAVIQGA (92 aa)). Phosphothreonine is present on Thr1170. Disordered stretches follow at residues 1172–1204 (KELR…KDAD), 1244–1306 (ATPD…EKKE), 1359–1383 (LKVA…LSSP), and 1810–1843 (KLYH…SLDS). Position 1181 is a phosphoserine (Ser1181). Low complexity predominate over residues 1181–1200 (SSDSISSLNSITSHSSIGSS). A compositionally biased stretch (polar residues) spans 1246–1264 (PDSSAPSSPKLQHGSTETA). Ser1265 carries the post-translational modification Phosphoserine. The segment covering 1265–1275 (SPSIKSSTSSS) has biased composition (low complexity). A coiled-coil region spans residues 1303–1362 (EKKEVSELRSELWEKEMKLTDIRLEALNSAHQLDQLRETMHNMQLEVDLLKAENDRLKVA). Over residues 1366 to 1383 (SSGSTPGQVPGSSALSSP) the composition is skewed to polar residues. Residue Ser1382 is modified to Phosphoserine.

Belongs to the Nav/unc-53 family. As to quaternary structure, interacts with tubulin. In terms of tissue distribution, broadly expressed at low levels. Expressed at high levels in heart, skeletal muscle and placenta.

The protein localises to the cytoplasm. The protein resides in the cytoskeleton. In terms of biological role, may be involved in neuronal migration. The sequence is that of Neuron navigator 1 (NAV1) from Homo sapiens (Human).